The following is a 259-amino-acid chain: Hydroxyacylglutathione hydrolase (259 aa).

Residues His56, His58, Asp60, His61, His112, Asp133, and His171 each contribute to the Zn(2+) site.

This sequence belongs to the metallo-beta-lactamase superfamily. Glyoxalase II family. In terms of assembly, monomer. Zn(2+) serves as cofactor.

It catalyses the reaction an S-(2-hydroxyacyl)glutathione + H2O = a 2-hydroxy carboxylate + glutathione + H(+). It participates in secondary metabolite metabolism; methylglyoxal degradation; (R)-lactate from methylglyoxal: step 2/2. Functionally, thiolesterase that catalyzes the hydrolysis of S-D-lactoyl-glutathione to form glutathione and D-lactic acid. In Pseudomonas putida (strain ATCC 700007 / DSM 6899 / JCM 31910 / BCRC 17059 / LMG 24140 / F1), this protein is Hydroxyacylglutathione hydrolase.